The primary structure comprises 163 residues: Lipoprotein signal peptidase (163 aa).

A run of 3 helical transmembrane segments spans residues 11-31 (ILIA…IATT), 63-83 (KMTF…YFFI), and 88-108 (YNLF…GNFI). Active-site residues include aspartate 118 and aspartate 136. A helical membrane pass occupies residues 131 to 151 (IFNIADSSLTIGVILIIIALL).

The protein belongs to the peptidase A8 family.

The protein resides in the cell membrane. It catalyses the reaction Release of signal peptides from bacterial membrane prolipoproteins. Hydrolyzes -Xaa-Yaa-Zaa-|-(S,diacylglyceryl)Cys-, in which Xaa is hydrophobic (preferably Leu), and Yaa (Ala or Ser) and Zaa (Gly or Ala) have small, neutral side chains.. It participates in protein modification; lipoprotein biosynthesis (signal peptide cleavage). Its function is as follows. This protein specifically catalyzes the removal of signal peptides from prolipoproteins. This chain is Lipoprotein signal peptidase, found in Staphylococcus aureus (strain Mu3 / ATCC 700698).